The following is a 73-amino-acid chain: Large ribosomal subunit protein uL24 (73 aa).

The segment covering 51-65 (DDNPKGGFIHKEKPM) has biased composition (basic and acidic residues). The disordered stretch occupies residues 51 to 73 (DDNPKGGFIHKEKPMHISNVKKA).

It belongs to the universal ribosomal protein uL24 family. Part of the 50S ribosomal subunit.

Functionally, one of two assembly initiator proteins, it binds directly to the 5'-end of the 23S rRNA, where it nucleates assembly of the 50S subunit. In terms of biological role, one of the proteins that surrounds the polypeptide exit tunnel on the outside of the subunit. This chain is Large ribosomal subunit protein uL24, found in Helicobacter acinonychis (strain Sheeba).